The following is a 128-amino-acid chain: Fluoride-specific ion channel FluC (128 aa).

4 helical membrane-spanning segments follow: residues 4-24 (LLLALIVGLGGFLGASLRYLI), 39-59 (GTLIANILGALLIGFIMEFSM), 71-91 (FLTTGIMGGLTTFSTFSYETI), and 99-119 (ITLGIENIILNLGCSLLFVVI). 2 residues coordinate Na(+): Gly78 and Thr81.

This sequence belongs to the fluoride channel Fluc/FEX (TC 1.A.43) family.

The protein resides in the cell membrane. It catalyses the reaction fluoride(in) = fluoride(out). With respect to regulation, na(+) is not transported, but it plays an essential structural role and its presence is essential for fluoride channel function. Functionally, fluoride-specific ion channel. Important for reducing fluoride concentration in the cell, thus reducing its toxicity. The chain is Fluoride-specific ion channel FluC from Clostridium perfringens (strain ATCC 13124 / DSM 756 / JCM 1290 / NCIMB 6125 / NCTC 8237 / Type A).